Here is a 299-residue protein sequence, read N- to C-terminus: MGDTTKDDGSSQSKAVRGEKRAFFFRKWTRIDIARASAVGAVHLLCLLAPFNYKWEALRFGVILAIVTSLSITFSYHRNLTHKSFKLPKWLEYPFAYSALFALQGHPIDWVSTHRFHHQFTDSDRDPHSPIEGFWFSHVFWIFDTSYIREKCGGRDNVMDLKQQWFYRFLRNTIGLHILTFWTLVYLWGGLPYLTCGVGVGGTIGYNGTWLINSACHIWGSRAWNTKDTSRNIWWLGPFTMGESWHNNHHAFEASARHGLEWYQVDLTWYLICFFQALGLATDVKLPTDAQKRKLAFAR.

Helical transmembrane passes span 31-51 (IDIA…LAPF) and 55-75 (WEAL…ITFS). The Histidine box-1 signature appears at 77-82 (HRNLTH). Residues 114–118 (HRFHH) carry the Histidine box-2 motif. Transmembrane regions (helical) follow at residues 174 to 194 (IGLH…LPYL) and 198 to 218 (VGVG…ACHI). The Histidine box-3 motif lies at 246–250 (HNNHH). A helical transmembrane segment spans residues 262–282 (WYQVDLTWYLICFFQALGLAT).

The protein belongs to the fatty acid desaturase type 1 family. Fe cation is required as a cofactor.

It localises to the endoplasmic reticulum membrane. The protein operates within lipid metabolism; polyunsaturated fatty acid biosynthesis. In Arabidopsis thaliana (Mouse-ear cress), this protein is Delta-9 desaturase-like 1 protein.